Reading from the N-terminus, the 361-residue chain is sn-glycerol-3-phosphate import ATP-binding protein UgpC (361 aa).

In terms of domain architecture, ABC transporter spans 4-235 (LSLKGVRKSY…PATVFVAGFI (232 aa)). Position 37–44 (37–44 (GPSGCGKS)) interacts with ATP.

It belongs to the ABC transporter superfamily. sn-glycerol-3-phosphate importer (TC 3.A.1.1.3) family. As to quaternary structure, the complex is composed of two ATP-binding proteins (UgpC), two transmembrane proteins (UgpA and UgpE) and a solute-binding protein (UgpB).

It localises to the cell inner membrane. The enzyme catalyses sn-glycerol 3-phosphate(out) + ATP + H2O = sn-glycerol 3-phosphate(in) + ADP + phosphate + H(+). Functionally, part of the ABC transporter complex UgpBAEC involved in sn-glycerol-3-phosphate (G3P) import. Responsible for energy coupling to the transport system. This is sn-glycerol-3-phosphate import ATP-binding protein UgpC from Burkholderia lata (strain ATCC 17760 / DSM 23089 / LMG 22485 / NCIMB 9086 / R18194 / 383).